Here is a 557-residue protein sequence, read N- to C-terminus: Hydroxylamine reductase (557 aa).

[4Fe-4S] cluster is bound by residues C3, C6, C19, and C26. The hybrid [4Fe-2O-2S] cluster site is built by H253, E277, C321, C408, C436, C461, E495, and K497. Position 408 is a cysteine persulfide (C408).

The protein belongs to the HCP family. The cofactor is [4Fe-4S] cluster. Hybrid [4Fe-2O-2S] cluster serves as cofactor.

It localises to the cytoplasm. The enzyme catalyses A + NH4(+) + H2O = hydroxylamine + AH2 + H(+). In terms of biological role, catalyzes the reduction of hydroxylamine to form NH(3) and H(2)O. The sequence is that of Hydroxylamine reductase from Acidiphilium cryptum (strain JF-5).